Reading from the N-terminus, the 200-residue chain is Neutrophil gelatinase-associated lipocalin (200 aa).

An N-terminal signal peptide occupies residues Met1 to Ala20. Gln21 is subject to Pyrrolidone carboxylic acid. Tyr72 to Thr74 lines the a carboxymycobactin pocket. 2 N-linked (GlcNAc...) asparagine glycosylation sites follow: Asn81 and Asn85. Cysteines 98 and 197 form a disulfide. Tyr128 is an enterobactin binding site. The a carboxymycobactin site is built by Lys147, Lys156, and Tyr160. Enterobactin is bound at residue Lys156.

This sequence belongs to the calycin superfamily. Lipocalin family. In terms of assembly, monomer. Homodimer; disulfide-linked. Heterodimer; disulfide-linked with MMP9. In terms of processing, N-glycosylated. As to expression, expressed in the cortical tubules of the kidney (at protein level). Also expressed in the medullary tubules of the kidney. Detected in lung, spleen, uterus, vagina and epididymis.

The protein localises to the secreted. It localises to the cytoplasmic granule lumen. It is found in the cytoplasmic vesicle lumen. Iron-trafficking protein involved in multiple processes such as apoptosis, innate immunity and renal development. Binds iron through association with 2,3-dihydroxybenzoic acid (2,3-DHBA), a siderophore that shares structural similarities with bacterial enterobactin, and delivers or removes iron from the cell, depending on the context. Iron-bound form (holo-24p3) is internalized following binding to the SLC22A17 (24p3R) receptor, leading to release of iron and subsequent increase of intracellular iron concentration. In contrast, association of the iron-free form (apo-24p3) with the SLC22A17 (24p3R) receptor is followed by association with an intracellular siderophore, iron chelation and iron transfer to the extracellular medium, thereby reducing intracellular iron concentration. Involved in apoptosis due to interleukin-3 (IL3) deprivation: iron-loaded form increases intracellular iron concentration without promoting apoptosis, while iron-free form decreases intracellular iron levels, inducing expression of the proapoptotic protein BCL2L11/BIM, resulting in apoptosis. Involved in innate immunity; limits bacterial proliferation by sequestering iron bound to microbial siderophores, such as enterobactin. Can also bind siderophores from M.tuberculosis. This chain is Neutrophil gelatinase-associated lipocalin (Lcn2), found in Mus musculus (Mouse).